Reading from the N-terminus, the 701-residue chain is Coiled-coil domain-containing protein 62 (701 aa).

2 coiled-coil regions span residues 61–197 (ETST…LQAR) and 241–342 (TCVV…QFLN). The tract at residues 624–652 (KSAEREEESAALPDRRTSANEKDDFSPTS) is disordered. Residues 636-648 (PDRRTSANEKDDF) show a composition bias toward basic and acidic residues. 2 short sequence motifs (LXXLL motif) span residues 654-658 (LQRLL) and 670-674 (LSTLL).

In terms of assembly, interacts with ESR1 and ESR2 in the presence of estradiol/E2. The interaction with ESR2 recruits CCDC62 to ER target genes, including cyclin-D1/CCND1 AP-1 promoter. Interacts with GOPC. In terms of tissue distribution, highly expressed in testis, not detected in other tissues (at protein level). Expressed at low levels in the epididymis, lung, spleen, bladder, kidney, liver, muscle.

The protein resides in the cytoplasm. Its subcellular location is the nucleus. It is found in the cytoplasmic vesicle. The protein localises to the secretory vesicle. It localises to the acrosome. Its function is as follows. Nuclear receptor coactivator that can enhance preferentially estrogen receptors ESR1 and ESR2 transactivation. Also modulates progesterone/PGR, glucocorticoid/NR3C1 and androgen/AR receptors transactivation, although at lower level; little effect on vitamin D receptor/VDR. Required for normal spermiogenesis. It probably plays a role in acrosome formation. This is Coiled-coil domain-containing protein 62 (Ccdc62) from Mus musculus (Mouse).